The chain runs to 143 residues: Holo-[acyl-carrier-protein] synthase (143 aa).

Residues aspartate 8 and glutamate 62 each contribute to the Mg(2+) site.

It belongs to the P-Pant transferase superfamily. AcpS family. Mg(2+) serves as cofactor.

The protein resides in the cytoplasm. The enzyme catalyses apo-[ACP] + CoA = holo-[ACP] + adenosine 3',5'-bisphosphate + H(+). Functionally, transfers the 4'-phosphopantetheine moiety from coenzyme A to a Ser of acyl-carrier-protein. The chain is Holo-[acyl-carrier-protein] synthase from Cupriavidus metallidurans (strain ATCC 43123 / DSM 2839 / NBRC 102507 / CH34) (Ralstonia metallidurans).